A 244-amino-acid polypeptide reads, in one-letter code: Protein TIFY 10b (244 aa).

In terms of domain architecture, Tify spans 97 to 132 (QEPEKRQLTIFYGGKVLVFNDFPADKAKGLMQLASK). A Jas motif is present at residues 185–210 (PIARKASLHRFLEKRKDRLNAKTPYQ). The Nuclear localization signal signature appears at 187–194 (ARKASLHR). The disordered stretch occupies residues 193-244 (HRFLEKRKDRLNAKTPYQASPSDATPVKKEPESQPWLGLGPNAVVKPIERGQ). The span at 194 to 204 (RFLEKRKDRLN) shows a compositional bias: basic and acidic residues.

The protein belongs to the TIFY/JAZ family. In terms of processing, ubiquitinated. Targeted for degradation by the SCF(COI1) E3 ubiquitin ligase-proteasome pathway during jasmonate signaling.

The protein localises to the nucleus. Functionally, repressor of jasmonate responses. The sequence is that of Protein TIFY 10b from Oryza sativa subsp. indica (Rice).